The chain runs to 495 residues: Protein SLENDER RICE1-LIKE 1 (495 aa).

The GRAS domain maps to 77-449 (EEEEVAGIRL…RPLFSASAWE (373 aa)). The tract at residues 84–140 (IRLVHLLMSCAGAIEAGDHALASAQLADSHAALAAVSAASGIGRVAVHFTTALSRRL) is leucine repeat I (LRI). The segment at 158 to 223 (YHHFYEACPY…GGPPFLRITG (66 aa)) is VHIID. The short motif at 189–193 (VHVID) is the VHIID element. A leucine repeat II (LRII) region spans residues 237–269 (DVGLRLADLARSVRVRFSFRGVAANSLDEVRPW). Residues 279–371 (VAFNSVLQLH…EAYLQREICD (93 aa)) form a PFYRE region. An LXXLL motif motif is present at residues 287 to 291 (LHRLL). Positions 374–449 (CGEGAARRER…RPLFSASAWE (76 aa)) are SAW. A disordered region spans residues 451–495 (AGDGGGDNNNNSNSNVSGSSGSDSNNSGSSNGKSSGARDGSSVCL). Over residues 458-485 (NNNNSNSNVSGSSGSDSNNSGSSNGKSS) the composition is skewed to low complexity.

This sequence belongs to the GRAS family. In terms of tissue distribution, expressed in elongating internodes and flowers. Expressed in floral meristem, stamen primordia and tapetum in developing anthers. Expressed at low levels in roots, shoot apices and rachis.

Its subcellular location is the nucleus. Probable transcriptional regulator that acts as a repressor of the gibberellin (GA) signaling pathway. Its repressive activity is weaker than that of SLR1. Its overexpression prevents the GA signaling pathway and induces a dwarf phenotype. The polypeptide is Protein SLENDER RICE1-LIKE 1 (Oryza sativa subsp. japonica (Rice)).